The following is a 278-amino-acid chain: Orotidine 5'-phosphate decarboxylase (278 aa).

Residue lysine 95 is the Proton donor of the active site.

It belongs to the OMP decarboxylase family. Type 2 subfamily.

The catalysed reaction is orotidine 5'-phosphate + H(+) = UMP + CO2. Its pathway is pyrimidine metabolism; UMP biosynthesis via de novo pathway; UMP from orotate: step 2/2. The protein is Orotidine 5'-phosphate decarboxylase of Methylibium petroleiphilum (strain ATCC BAA-1232 / LMG 22953 / PM1).